Consider the following 56-residue polypeptide: Large ribosomal subunit protein bL33 (56 aa).

It belongs to the bacterial ribosomal protein bL33 family.

This Ehrlichia canis (strain Jake) protein is Large ribosomal subunit protein bL33.